Reading from the N-terminus, the 284-residue chain is Homeobox protein SIX1 (284 aa).

A DNA-binding region (homeobox) is located at residues 124–183 (GEETSYCFKEKSRGVLREWYAHNPYPSPREKRELAEATGLTTTQVSNWFKNRRQRDRAAE). The disordered stretch occupies residues 168–271 (VSNWFKNRRQ…AHQHQLQDSL (104 aa)). Residues 179 to 190 (DRAAEAKERENT) show a composition bias toward basic and acidic residues. Residues 242-271 (RSSNYSLPGLTASQPSHGLQAHQHQLQDSL) are compositionally biased toward polar residues.

This sequence belongs to the SIX/Sine oculis homeobox family. As to quaternary structure, interacts with DACH1. Interacts with EYA1. Interacts with EYA2. Interacts with CDH1. Interacts with TBX18. Interacts with CEBPA. Interacts with CEBPB. Interacts with EBF2. Phosphorylated during interphase; becomes hyperphosphorylated during mitosis. Hyperphosphorylation impairs binding to promoter elements. In terms of processing, ubiquitinated by the anaphase promoting complex (APC), leading to its proteasomal degradation.

It localises to the nucleus. The protein resides in the cytoplasm. In terms of biological role, transcription factor that is involved in the regulation of cell proliferation, apoptosis and embryonic development. Plays an important role in the development of several organs, including kidney, muscle and inner ear. Depending on context, functions as a transcriptional repressor or activator. Lacks an activation domain, and requires interaction with EYA family members for transcription activation. Mediates nuclear translocation of EYA1 and EYA2. Binds the 5'-TCA[AG][AG]TTNC-3' motif present in the MEF3 element in the MYOG promoter and CIDEA enhancer. Regulates the expression of numerous genes, including MYC, CCNA1, CCND1 and EZR. Acts as an activator of the IGFBP5 promoter, probably coactivated by EYA2. Repression of precursor cell proliferation in myoblasts is switched to activation through recruitment of EYA3 to the SIX1-DACH1 complex. During myogenesis, seems to act together with EYA2 and DACH2. Regulates the expression of CCNA1. Promotes brown adipocyte differentiation. This is Homeobox protein SIX1 (SIX1) from Lagothrix lagotricha (Brown woolly monkey).